We begin with the raw amino-acid sequence, 605 residues long: Elongation factor 4 (605 aa).

The 183-residue stretch at 5–187 (ALIRNFSIIA…AVVERIPPPK (183 aa)) folds into the tr-type G domain. Residues 17–22 (DHGKST) and 134–137 (NKID) contribute to the GTP site.

It belongs to the TRAFAC class translation factor GTPase superfamily. Classic translation factor GTPase family. LepA subfamily.

It localises to the cell inner membrane. The catalysed reaction is GTP + H2O = GDP + phosphate + H(+). Functionally, required for accurate and efficient protein synthesis under certain stress conditions. May act as a fidelity factor of the translation reaction, by catalyzing a one-codon backward translocation of tRNAs on improperly translocated ribosomes. Back-translocation proceeds from a post-translocation (POST) complex to a pre-translocation (PRE) complex, thus giving elongation factor G a second chance to translocate the tRNAs correctly. Binds to ribosomes in a GTP-dependent manner. In Novosphingobium aromaticivorans (strain ATCC 700278 / DSM 12444 / CCUG 56034 / CIP 105152 / NBRC 16084 / F199), this protein is Elongation factor 4.